The primary structure comprises 919 residues: Transcriptional regulatory protein EDS1 (919 aa).

Residues 1–54 (MSHHVPNLYGTPIRDPHERKRNSASMGEVNQSVSSRNCERGSEKGTKQRKKASR) form a disordered region. Polar residues predominate over residues 23 to 36 (SASMGEVNQSVSSR). A compositionally biased stretch (basic and acidic residues) spans 37 to 46 (NCERGSEKGT). The zn(2)-C6 fungal-type DNA-binding region spans 56–85 (CDQCRRKRIKCRFDKHTGVCQGCLEVGEKC). Positions 297–338 (AGCPNKKLGTDGRSDKWDKNSTWKPVYRSSNPSHPSTEKNVS) are disordered. Residues 304-317 (LGTDGRSDKWDKNS) show a composition bias toward basic and acidic residues. Positions 318–338 (TWKPVYRSSNPSHPSTEKNVS) are enriched in polar residues.

As to quaternary structure, binds DNA in a sequence-specific manner.

The protein resides in the nucleus. In Saccharomyces cerevisiae (strain RM11-1a) (Baker's yeast), this protein is Transcriptional regulatory protein EDS1 (EDS1).